The sequence spans 439 residues: Glycosyl hydrolase DigH (439 aa).

Positions 1–27 are cleaved as a signal peptide; sequence MDICSRNEKLAIRRPAILVALALLLCS. The N-palmitoyl cysteine moiety is linked to residue cysteine 28. The S-diacylglycerol cysteine moiety is linked to residue cysteine 28. Residues 34 to 54 form a disordered region; that stretch reads ESMVTPPAGSKPPATTQQSSQ.

The protein belongs to the glycosyl hydrolase-like 10 (GHL10) family.

The protein resides in the cell outer membrane. In terms of biological role, divisome-localized glycosyl hydrolase that cleaves peptide-free (denuded) peptidoglycans. This chain is Glycosyl hydrolase DigH, found in Escherichia coli O6:H1 (strain CFT073 / ATCC 700928 / UPEC).